The chain runs to 448 residues: Leukocyte immunoglobulin-like receptor subfamily B member 4 (448 aa).

The first 21 residues, 1 to 21 (MIPTFTALLCLGLSLGPRTHM), serve as a signal peptide directing secretion. The Extracellular portion of the chain corresponds to 22-259 (QAGPLPKPTL…PHSGLRRHWE (238 aa)). Ig-like C2-type domains are found at residues 27–118 (PKPT…LVMT) and 124–218 (PTLS…LIVS). 2 cysteine pairs are disulfide-bonded: C49–C98 and C144–C195. The segment at 217 to 248 (VSGSLEDPRPSPTRSVSTAAGPEDQPLMPTGS) is disordered. The helical transmembrane segment at 260 to 280 (VLIGVLVVSILLLSLLLFLLL) threads the bilayer. At 281–448 (QHWRQGKHRT…PSVYATLAIH (168 aa)) the chain is on the cytoplasmic side. The interval 297 to 448 (DFQRPPGAAE…PSVYATLAIH (152 aa)) is disordered. S319 carries the phosphoserine modification. The segment covering 344–354 (MDTRQSPHDED) has biased composition (basic and acidic residues). The ITIM motif 1 signature appears at 358–363 (VTYAKV). A compositionally biased stretch (basic and acidic residues) spans 384–398 (LDTKDRQAEEDRQMD). 2 short sequence motifs (ITIM motif) span residues 410 to 415 (VTYAQL) and 440 to 445 (SVYATL).

As to quaternary structure, interacts with PTPN6. As to expression, detected on monocytes, macrophages, dendritic cells, natural killer cells and B-cells (at protein level). Expressed in the lung.

It is found in the cell membrane. Inhibitory receptor involved in the down-regulation of the immune response and the development of immune tolerance. Receptor for FN1. Receptor for apolipoprotein APOE. Receptor for ALCAM/CD166. Inhibits receptor-mediated phosphorylation of cellular proteins and mobilization of intracellular calcium ions. Inhibits FCGR1A/CD64-mediated monocyte activation by inducing phosphatase-mediated down-regulation of the phosphorylation of multiple proteins including LCK, SYK, LAT and ERK, leading to a reduction in TNF production. This inhibition of monocyte activation occurs at least in part via binding to FN1. Inhibits T cell proliferation, inducing anergy, suppressing the differentiation of IFNG-producing CD8+ cytotoxic T cells and enhancing the generation of CD8+ T suppressor cells. Induces up-regulation of CD86 on dendritic cells. Interferes with TNFRSF5-signaling and NF-kappa-B up-regulation. The protein is Leukocyte immunoglobulin-like receptor subfamily B member 4 (LILRB4) of Homo sapiens (Human).